The following is a 390-amino-acid chain: Tuftelin (390 aa).

Coiled coils occupy residues D88–R126 and P163–V352. Residues N356 to P383 form a disordered region.

This sequence belongs to the tuftelin family. In terms of assembly, interacts with TFIP11. May form oligomers. As to expression, ameloblasts, and also non-odontogenic tissues including kidney, lung, liver and testis.

It is found in the secreted. Involved in the structural organization of the epidermis. Involved in the mineralization and structural organization of enamel. The chain is Tuftelin (Tuft1) from Mus musculus (Mouse).